The primary structure comprises 189 residues: Molybdenum cofactor guanylyltransferase (189 aa).

Residues 12–14 (LAG), lysine 24, aspartate 68, and aspartate 94 contribute to the GTP site. Aspartate 94 lines the Mg(2+) pocket.

It belongs to the MobA family. In terms of assembly, monomer. It depends on Mg(2+) as a cofactor.

The protein resides in the cytoplasm. The catalysed reaction is Mo-molybdopterin + GTP + H(+) = Mo-molybdopterin guanine dinucleotide + diphosphate. Transfers a GMP moiety from GTP to Mo-molybdopterin (Mo-MPT) cofactor (Moco or molybdenum cofactor) to form Mo-molybdopterin guanine dinucleotide (Mo-MGD) cofactor. The sequence is that of Molybdenum cofactor guanylyltransferase from Xanthomonas euvesicatoria pv. vesicatoria (strain 85-10) (Xanthomonas campestris pv. vesicatoria).